We begin with the raw amino-acid sequence, 1211 residues long: Endoplasmic reticulum transmembrane helix translocase (1211 aa).

The Cytoplasmic segment spans residues 1 to 23 (MGSKALITSPDISSGQLYIKLPT). Residues 24 to 44 (FFHLYVWPFALFVYPYIGYVY) form a helical membrane-spanning segment. The Lumenal portion of the chain corresponds to 45-54 (QNKLYSEEVR). The chain crosses the membrane as a helical span at residues 55-75 (YLTYIAVGTIHALFWLAGEWN). Residues 76 to 191 (TKVYCLMTCR…FDIPIPTFGT (116 aa)) lie on the Cytoplasmic side of the membrane. The A-domain; part 1 stretch occupies residues 155-185 (TIGTLKKSTGLTNIQSEIFLYRYGKNCFDIP). A helical transmembrane segment spans residues 192-212 (LFKEHAVAPFFVFQIFCCVLW). Residues 213 to 216 (CLDD) are Lumenal-facing. Residues 217-237 (YWYFSLFSMFMIIALECSVVW) form a helical membrane-spanning segment. Residues 238–397 (QRQRTLTEFR…EKVTANNRES (160 aa)) lie on the Cytoplasmic side of the membrane. Residues 250-388 (SIKPYEIQVY…LVRTMVFSSE (139 aa)) are A-domain; part 2. Residues 398-418 (LYFILFLLVFAIAASGYVWHV) traverse the membrane as a helical segment. At 419-1057 (GSKTERSRYK…KERPQAGIFN (639 aa)) the chain is on the lumenal side. The segment at 464–493 (YIYCTEPFRIPLSGHLDICCFDKTGTLTEE) is P-domain; part 1. Residue aspartate 485 is the 4-aspartylphosphate intermediate of the active site. The Mg(2+) site is built by aspartate 485 and threonine 487. ATP is bound by residues 485–487 (DKT), phenylalanine 587, arginine 644, aspartate 710, and 824–828 (DGTND). Residues 495–685 (MVVQGIAGVN…FAGFLIFTSP (191 aa)) are N-domain. The interval 688-845 (EDARQTVQML…HVGVALLNAS (158 aa)) is P-domain; part 2. Aspartate 824 contributes to the Mg(2+) binding site. The arm-like stretch occupies residues 846–955 (EEDMLEMQER…NASDDEAPKL (110 aa)). Residues 956–971 (KLGDASVAAPFTSKLA) form a P-domain; part 3 region. Residues 1058–1078 (TYIIGSVLGQFAIHIVTLIYI) form a helical membrane-spanning segment. The Cytoplasmic segment spans residues 1079-1100 (TRVVYLYEDPLEKVDLEETFKP). The helical transmembrane segment at 1101 to 1121 (SLLNTAIYLLQLIQQVSTFAI) threads the bilayer. Topologically, residues 1122-1136 (NYQGRPFREALSENK) are lumenal. A helical membrane pass occupies residues 1137–1157 (GMYYGLLGIAFVAIAGVTEFS). The Cytoplasmic segment spans residues 1158 to 1174 (PELNAKLQLVKMAYNFQ). A helical membrane pass occupies residues 1175 to 1195 (IQLLATMVVDYAACWIIEELM). Topologically, residues 1196–1211 (KKYFRDNKPKEIVLRN) are lumenal.

The protein belongs to the cation transport ATPase (P-type) (TC 3.A.3) family. Type V subfamily. It depends on Mg(2+) as a cofactor.

The protein resides in the endoplasmic reticulum membrane. It catalyses the reaction [protein]-with a C-terminal TM segment(out) + ATP + H2O = [protein]-with a C-terminal TM segment(in) + ADP + phosphate + H(+). Its function is as follows. Endoplasmic reticulum translocase required to remove mitochondrial transmembrane proteins mistargeted to the endoplasmic reticulum. Acts as a dislocase that mediates the ATP-dependent extraction of mislocalized mitochondrial transmembrane proteins from the endoplasmic reticulum membrane. Specifically binds mitochondrial tail-anchored transmembrane proteins: has an atypically large substrate-binding pocket that recognizes and binds moderately hydrophobic transmembranes with short hydrophilic lumenal domains. Involved in controlling nuclear calcium ion levels. Required for cytokinesis and stabilizing microtubules. Required for assembly of the forespore membrane. Involved in calcium transport to the endoplasmic reticulum. This chain is Endoplasmic reticulum transmembrane helix translocase, found in Schizosaccharomyces pombe (strain 972 / ATCC 24843) (Fission yeast).